The following is a 215-amino-acid chain: Adenylate kinase (215 aa).

10-15 (GAGKGT) contributes to the ATP binding site. The segment at 30-59 (STGDIFRDAVNQGSELGQEAQKYMSSGQLV) is NMP. AMP-binding positions include threonine 31, arginine 36, 57–59 (QLV), 85–88 (GFPR), and glutamine 92. The interval 126-163 (GRISCRECKRVYNLNFNPPREQGKCDSCGGELVQRNDD) is LID. ATP is bound at residue arginine 127. The Zn(2+) site is built by cysteine 130 and cysteine 133. 136–137 (VY) is an ATP binding site. Residues cysteine 150 and cysteine 153 each coordinate Zn(2+). The AMP site is built by arginine 160 and arginine 171. Position 199 (arginine 199) interacts with ATP.

The protein belongs to the adenylate kinase family. Monomer.

Its subcellular location is the cytoplasm. The catalysed reaction is AMP + ATP = 2 ADP. It functions in the pathway purine metabolism; AMP biosynthesis via salvage pathway; AMP from ADP: step 1/1. In terms of biological role, catalyzes the reversible transfer of the terminal phosphate group between ATP and AMP. Plays an important role in cellular energy homeostasis and in adenine nucleotide metabolism. The chain is Adenylate kinase from Syntrophomonas wolfei subsp. wolfei (strain DSM 2245B / Goettingen).